The primary structure comprises 271 residues: MFSIQQPLLVFSDLDGTLLDSHSYDWQPAAPWLTRLREANVPVILCSSKTSAEMLYLQKTLGLQGLPLIAENGAVIQLAEQWQEIDGFPRIISGISHGEISQVLNTLREKEHFKFTTFDDVDDATITEWTGLSRSQAALTQLHEASVTLIWRDSDERMAQFTARLNELGLQFMQGARFWHVLDASAGKDQAANWIIATYQQLSGKRPTTLGLGDGPNDAPLLEVMDYAVIVKGLNREGVHLHDEDPARVWRTQREGPEGWREGLDHFFSAR.

The Nucleophile role is filled by Asp-13. 3 residues coordinate Mg(2+): Asp-13, Asp-15, and Asp-214.

Belongs to the HAD-like hydrolase superfamily. MPGP family. The cofactor is Mg(2+).

The protein localises to the cytoplasm. The enzyme catalyses 2-O-(alpha-D-mannosyl)-3-phosphoglycerate + H2O = (2R)-2-O-(alpha-D-mannosyl)-glycerate + phosphate. The protein is Mannosyl-3-phosphoglycerate phosphatase (yedP) of Shigella dysenteriae serotype 1 (strain Sd197).